The sequence spans 68 residues: Conotoxin Mr3.3 (68 aa).

The signal sequence occupies residues 1–19 (MSRLGVLLTICLLLFPLTA). Residues 20 to 51 (VPLDGDQPADRPAERLQDDISSEHHPHFDSGR) constitute a propeptide that is removed on maturation. A disordered region spans residues 22-46 (LDGDQPADRPAERLQDDISSEHHPH). A compositionally biased stretch (basic and acidic residues) spans 27-46 (PADRPAERLQDDISSEHHPH). 3 cysteine pairs are disulfide-bonded: cysteine 53–cysteine 67, cysteine 54–cysteine 63, and cysteine 59–cysteine 66. Proline 65 is subject to 4-hydroxyproline.

It belongs to the conotoxin M superfamily. Expressed by the venom duct.

It is found in the secreted. In Conus marmoreus (Marble cone), this protein is Conotoxin Mr3.3.